We begin with the raw amino-acid sequence, 261 residues long: Kallikrein 1-related peptidase b16 (261 aa).

An N-terminal signal peptide occupies residues 1-18 (MWFLILFLALSLGGIDAA). A propeptide spans 19–24 (PPVQSR) (activation peptide). The region spanning 25-258 (IVGGFKCEKN…FNSWIKDTMM (234 aa)) is the Peptidase S1 domain. Intrachain disulfides connect Cys-31-Cys-173, Cys-50-Cys-66, Cys-152-Cys-219, Cys-184-Cys-198, and Cys-209-Cys-234. Catalysis depends on His-65, which acts as the Charge relay system. Residue Asn-102 is glycosylated (N-linked (GlcNAc...) asparagine). Residue Asp-120 is the Charge relay system of the active site. The Charge relay system role is filled by Ser-213.

This sequence belongs to the peptidase S1 family. Kallikrein subfamily.

The enzyme catalyses Cleavage of the Leu-|-Leu bond in synthetic tetradecapeptide renin substrate, to produce angiotensin I, but not active on natural angiotensinogen. Also hydrolyzes Bz-Arg-p-nitroanilide.. The sequence is that of Kallikrein 1-related peptidase b16 (Klk1b16) from Mus musculus (Mouse).